Reading from the N-terminus, the 303-residue chain is Hemolysin E (303 aa).

Cysteines 87 and 285 form a disulfide. The helical transmembrane segment at 183 to 203 (AGVVAGPFGLIISYSIAAGVV) threads the bilayer.

The protein belongs to the hemolysin E family. As to quaternary structure, monomer and oligomer. In periplasm, it is present as a monomer, while in outer membrane vesicles, it oligomerizes to form a pore structure that is active. The pore is formed by a dodecamer. In periplasm, it forms a disulfide bond, which prevents the oligomerization. In outer membrane vesicles, the redox status prevents formation of the disulfide bond, leading to oligomerization and pore formation.

Its subcellular location is the secreted. The protein resides in the periplasm. It is found in the host cell membrane. Functionally, toxin, which has some hemolytic activity towards mammalian cells. Acts by forming a pore-like structure upon contact with mammalian cells. The chain is Hemolysin E (hlyE) from Escherichia coli O157:H7.